Reading from the N-terminus, the 509-residue chain is Protein disulfide-isomerase (509 aa).

An N-terminal signal peptide occupies residues 1 to 19 (MLSRALLCLALAWAARVGA). The Thioredoxin 1 domain maps to 20 to 136 (DALEEEDNVL…IVNWLKKRTG (117 aa)). Residues C55 and C58 each act as nucleophile in the active site. C55 and C58 are disulfide-bonded. At K202 the chain carries N6-acetyllysine. N6-succinyllysine is present on residues K224 and K273. A phosphoserine mark is found at S333 and S359. The 143-residue stretch at 335–477 (ELTAEKITQF…FKKFLESGGQ (143 aa)) folds into the Thioredoxin 2 domain. Catalysis depends on nucleophile residues C399 and C402. The cysteines at positions 399 and 402 are disulfide-linked. S429 carries the post-translational modification Phosphoserine. Residues 506 to 509 (KDEL) carry the Prevents secretion from ER motif.

This sequence belongs to the protein disulfide isomerase family. Heterodimer; heterodimerizes with the protein microsomal triglyceride transfer MTTP. Homodimer. Monomers and homotetramers may also occur. Interacts with P4HA2, forming a heterotetramer consisting of 2 alpha subunits (P4HA2) and 2 beta (P4HB), where P4HB plays the role of a structural subunit; this tetramer catalyzes the formation of 4-hydroxyproline in collagen. Also constitutes the structural subunit of the microsomal triacylglycerol transfer protein MTTP in mammalian cells. Stabilizes both enzymes and retain them in the ER without contributing to the catalytic activity. Binds UBQLN1. Interacts with ERO1B. Interacts with ILDR2. Interacts with ERN1/IRE1A (via N-terminus); the interaction is enhanced by phosphorylation of P4HB by FAM20C in response to endoplasmic reticulum stress and results in attenuation of ERN1 activity. In terms of processing, phosphorylation of Ser-359 by FAM20C is induced by endoplasmic reticulum stress and results in a functional switch from oxidoreductase to molecular chaperone. It also promotes interaction with ERN1.

The protein localises to the endoplasmic reticulum. It localises to the endoplasmic reticulum lumen. The protein resides in the melanosome. It is found in the cell membrane. The catalysed reaction is Catalyzes the rearrangement of -S-S- bonds in proteins.. Its function is as follows. This multifunctional protein catalyzes the formation, breakage and rearrangement of disulfide bonds. At the cell surface, seems to act as a reductase that cleaves disulfide bonds of proteins attached to the cell. May therefore cause structural modifications of exofacial proteins. Inside the cell, seems to form/rearrange disulfide bonds of nascent proteins. At high concentrations and following phosphorylation by FAM20C, functions as a chaperone that inhibits aggregation of misfolded proteins. At low concentrations, facilitates aggregation (anti-chaperone activity). May be involved with other chaperones in the structural modification of the TG precursor in hormone biogenesis. Also acts as a structural subunit of various enzymes such as prolyl 4-hydroxylase and microsomal triacylglycerol transfer protein MTTP. Receptor for LGALS9; the interaction retains P4HB at the cell surface of Th2 T helper cells, increasing disulfide reductase activity at the plasma membrane, altering the plasma membrane redox state and enhancing cell migration. The polypeptide is Protein disulfide-isomerase (P4hb) (Rattus norvegicus (Rat)).